Reading from the N-terminus, the 376-residue chain is Queuine tRNA-ribosyltransferase (376 aa).

D90 functions as the Proton acceptor in the catalytic mechanism. Substrate-binding positions include 90 to 94 (DSGGF), D144, Q193, and G220. The tract at residues 251 to 257 (GVGTPED) is RNA binding. D270 serves as the catalytic Nucleophile. The tract at residues 275 to 279 (TRNAR) is RNA binding; important for wobble base 34 recognition. Zn(2+) is bound by residues C308, C310, C313, and H339.

It belongs to the queuine tRNA-ribosyltransferase family. Homodimer. Within each dimer, one monomer is responsible for RNA recognition and catalysis, while the other monomer binds to the replacement base PreQ1. Requires Zn(2+) as cofactor.

The catalysed reaction is 7-aminomethyl-7-carbaguanine + guanosine(34) in tRNA = 7-aminomethyl-7-carbaguanosine(34) in tRNA + guanine. Its pathway is tRNA modification; tRNA-queuosine biosynthesis. Its function is as follows. Catalyzes the base-exchange of a guanine (G) residue with the queuine precursor 7-aminomethyl-7-deazaguanine (PreQ1) at position 34 (anticodon wobble position) in tRNAs with GU(N) anticodons (tRNA-Asp, -Asn, -His and -Tyr). Catalysis occurs through a double-displacement mechanism. The nucleophile active site attacks the C1' of nucleotide 34 to detach the guanine base from the RNA, forming a covalent enzyme-RNA intermediate. The proton acceptor active site deprotonates the incoming PreQ1, allowing a nucleophilic attack on the C1' of the ribose to form the product. After dissociation, two additional enzymatic reactions on the tRNA convert PreQ1 to queuine (Q), resulting in the hypermodified nucleoside queuosine (7-(((4,5-cis-dihydroxy-2-cyclopenten-1-yl)amino)methyl)-7-deazaguanosine). This Cupriavidus metallidurans (strain ATCC 43123 / DSM 2839 / NBRC 102507 / CH34) (Ralstonia metallidurans) protein is Queuine tRNA-ribosyltransferase.